Consider the following 393-residue polypeptide: S-adenosylmethionine synthase 2 (393 aa).

Glu-9 contributes to the Mg(2+) binding site. His-15 contributes to the ATP binding site. Glu-43 provides a ligand contact to K(+). Residues Glu-56 and Gln-99 each coordinate L-methionine. Residues 167 to 169 (DGK), 235 to 238 (SGRF), Asp-246, 252 to 253 (RK), Ala-269, Lys-273, and Lys-277 each bind ATP. Residue Asp-246 coordinates L-methionine. Lys-277 provides a ligand contact to L-methionine.

Belongs to the AdoMet synthase family. Homotetramer. Requires Mn(2+) as cofactor. The cofactor is Mg(2+). Co(2+) serves as cofactor. It depends on K(+) as a cofactor.

It localises to the cytoplasm. The catalysed reaction is L-methionine + ATP + H2O = S-adenosyl-L-methionine + phosphate + diphosphate. It functions in the pathway amino-acid biosynthesis; S-adenosyl-L-methionine biosynthesis; S-adenosyl-L-methionine from L-methionine: step 1/1. Its function is as follows. Catalyzes the formation of S-adenosylmethionine from methionine and ATP. The reaction comprises two steps that are both catalyzed by the same enzyme: formation of S-adenosylmethionine (AdoMet) and triphosphate, and subsequent hydrolysis of the triphosphate. This is S-adenosylmethionine synthase 2 (METK2) from Vitis vinifera (Grape).